The primary structure comprises 206 residues: 2-phospho-L-lactate guanylyltransferase (206 aa).

It belongs to the CofC family. Homodimer.

It carries out the reaction (2S)-2-phospholactate + GTP + H(+) = (2S)-lactyl-2-diphospho-5'-guanosine + diphosphate. The protein operates within cofactor biosynthesis; coenzyme F420 biosynthesis. In terms of biological role, guanylyltransferase that catalyzes the activation of (2S)-2-phospholactate (2-PL) as (2S)-lactyl-2-diphospho-5'-guanosine, via the condensation of 2-PL with GTP. It is involved in the biosynthesis of coenzyme F420, a hydride carrier cofactor. This Archaeoglobus profundus (strain DSM 5631 / JCM 9629 / NBRC 100127 / Av18) protein is 2-phospho-L-lactate guanylyltransferase.